We begin with the raw amino-acid sequence, 189 residues long: Inner membrane-spanning protein YciB (189 aa).

The next 5 membrane-spanning stretches (helical) occupy residues 3–23, 47–67, 76–96, 121–141, and 149–169; these read LLID…WGIY, IEPM…ATLL, WKPT…QLFF, WSWT…AHAF, and FKLF…ALYL.

Belongs to the YciB family.

It localises to the cell inner membrane. Plays a role in cell envelope biogenesis, maintenance of cell envelope integrity and membrane homeostasis. This Paracidovorax citrulli (strain AAC00-1) (Acidovorax citrulli) protein is Inner membrane-spanning protein YciB.